The sequence spans 317 residues: UV DNA damage endonuclease (317 aa).

Belongs to the uve1/UvsE family.

Its function is as follows. Component in a DNA repair pathway. Removal of UV LIGHT damaged nucleotides. Recognizes pyrimidine dimers and cleave a phosphodiester bond immediately 5' to the lesion. The chain is UV DNA damage endonuclease from Bacillus cereus (strain B4264).